A 451-amino-acid chain; its full sequence is Clusterin (451 aa).

An N-terminal signal peptide occupies residues 1–18 (MELPLLALLSLGLVCQGG). Intrachain disulfides connect Cys-98-Cys-314, Cys-109-Cys-306, Cys-112-Cys-303, Cys-117-Cys-296, and Cys-125-Cys-286. Residues Asn-99, Asn-141, Asn-278, Asn-355, Asn-375, and Asn-447 are each glycosylated (N-linked (GlcNAc...) asparagine).

Belongs to the clusterin family. As to quaternary structure, antiparallel disulfide-linked heterodimer of an alpha chain and a beta chain. Self-associates and forms higher oligomers. Interacts with a broad range of misfolded proteins. In terms of processing, proteolytically cleaved on its way through the secretory system, probably within the Golgi lumen. Post-translationally, polyubiquitinated, leading to proteasomal degradation.

Its subcellular location is the secreted. It localises to the cytoplasmic vesicle. It is found in the secretory vesicle. The protein resides in the chromaffin granule. The protein localises to the nucleus. Its subcellular location is the cytoplasm. It localises to the mitochondrion membrane. It is found in the cytosol. The protein resides in the endoplasmic reticulum. Its function is as follows. Functions as extracellular chaperone that prevents aggregation of nonnative proteins. Prevents stress-induced aggregation of blood plasma proteins. Does not require ATP. Maintains partially unfolded proteins in a state appropriate for subsequent refolding by other chaperones, such as HSPA8/HSC70. Does not refold proteins by itself. Binding to cell surface receptors triggers internalization of the chaperone-client complex and subsequent lysosomal or proteasomal degradation. When secreted, protects cells against apoptosis and against cytolysis by complement: inhibits assembly of the complement membrane attack complex (MAC) by preventing polymerization of C9 pore component of the MAC complex. Intracellular forms interact with ubiquitin and SCF (SKP1-CUL1-F-box protein) E3 ubiquitin-protein ligase complexes and promote the ubiquitination and subsequent proteasomal degradation of target proteins. Modulates NF-kappa-B transcriptional activity. Promotes apoptosis when in the nucleus. Inhibits apoptosis when associated with the mitochondrial membrane by interference with BAX-dependent release of cytochrome c into the cytoplasm. Plays a role in the regulation of cell proliferation. In Coturnix japonica (Japanese quail), this protein is Clusterin (CLU).